Consider the following 934-residue polypeptide: Serine/threonine-protein kinase PknD (934 aa).

Residues Tyr4–Leu296 form the Protein kinase domain. ATP is bound by residues Ile10 to Val18 and Lys33. Catalysis depends on Asp138, which acts as the Proton acceptor.

Belongs to the protein kinase superfamily. Ser/Thr protein kinase family. In terms of processing, autophosphorylated on serine and threonine residues.

It catalyses the reaction L-seryl-[protein] + ATP = O-phospho-L-seryl-[protein] + ADP + H(+). The enzyme catalyses L-threonyl-[protein] + ATP = O-phospho-L-threonyl-[protein] + ADP + H(+). Together with the serine/threonine kinase Pkn1, may play a role in the specific interactions with host proteins during intracellular growth. This is Serine/threonine-protein kinase PknD from Chlamydia muridarum (strain MoPn / Nigg).